The primary structure comprises 303 residues: MNPQELKSILSAGLLSFPVTDFNAQGDFNRAGYIKRLEWLAPYGASALFAAGGTGEFFSLAASEYSEIIKTAVDTCASSVPILAGVGGSTRQAIEYAQEAERLGAKGLLLLPHYLTEASQDGVAAHVEAVCKSVNIGVVVYNRNVCRLTAPLLERLAERCPNLIGYKDGLGDIELMVSIRRRLGDRFSYLGGLPTAEVYAAAYKALGVPVYSSAVFNFIPKTAMDFYHAIAREDHATVGKIIDDFFLPYLDIRNRKAGYAVSIVKAGAKIAGYDAGPVRAPLTDLTGEEYEMLAALIDKQGAQ.

The protein belongs to the DapA family.

It catalyses the reaction 5-dehydro-4-deoxy-D-glucarate + H(+) = 2,5-dioxopentanoate + CO2 + H2O. Its pathway is carbohydrate acid metabolism; D-glucarate degradation; 2,5-dioxopentanoate from D-glucarate: step 2/2. The protein is Probable 5-dehydro-4-deoxyglucarate dehydratase of Pseudomonas fluorescens (strain Pf0-1).